Here is a 116-residue protein sequence, read N- to C-terminus: Proline-rich protein 9 (116 aa).

This is Proline-rich protein 9 (Prr9) from Mus musculus (Mouse).